The sequence spans 575 residues: Probable cytochrome P450 514A1 (575 aa).

Residues isoleucine 4–leucine 24 traverse the membrane as a helical segment. A heme-binding site is contributed by cysteine 448.

The protein belongs to the cytochrome P450 family. The cofactor is heme.

The protein resides in the membrane. The chain is Probable cytochrome P450 514A1 (cyp514A1) from Dictyostelium discoideum (Social amoeba).